A 433-amino-acid polypeptide reads, in one-letter code: Actin-related protein 4 (433 aa).

Residues 289 to 317 (GSDEEMNEEPSKPIEQTENNEVSQQDSSV) are disordered. Over residues 302–317 (IEQTENNEVSQQDSSV) the composition is skewed to polar residues.

It belongs to the actin family. ARP4 subfamily. As to quaternary structure, component of the NuA4 histone acetyltransferase complex, of the INO80 chromatin remodeling complex, and of the SWR1 chromatin remodeling complex.

The protein localises to the nucleus. In terms of biological role, chromatin interaction component of the NuA4 histone acetyltransferase complex which is involved in transcriptional activation of selected genes principally by acetylation of nucleosomal histone H4 and H2A. The NuA4 complex is also involved in DNA repair. Is required for NuA4 complex integrity. Component of the SWR1 complex which mediates the ATP-dependent exchange of histone H2A for the H2A variant HZT1 leading to transcriptional regulation of selected genes by chromatin remodeling. Component of the INO80 complex which remodels chromatin by shifting nucleosomes and is involved in DNA repair. The chain is Actin-related protein 4 (alp5) from Schizosaccharomyces pombe (strain 972 / ATCC 24843) (Fission yeast).